Reading from the N-terminus, the 261-residue chain is 3-methyl-2-oxobutanoate hydroxymethyltransferase (261 aa).

Mg(2+) contacts are provided by D42 and D81. Residues D42–S43, D81, and K110 each bind 3-methyl-2-oxobutanoate. Mg(2+) is bound at residue E112. E179 serves as the catalytic Proton acceptor.

It belongs to the PanB family. In terms of assembly, homodecamer; pentamer of dimers. The cofactor is Mg(2+).

It localises to the cytoplasm. It carries out the reaction 3-methyl-2-oxobutanoate + (6R)-5,10-methylene-5,6,7,8-tetrahydrofolate + H2O = 2-dehydropantoate + (6S)-5,6,7,8-tetrahydrofolate. Its pathway is cofactor biosynthesis; coenzyme A biosynthesis. Functionally, catalyzes the reversible reaction in which hydroxymethyl group from 5,10-methylenetetrahydrofolate is transferred onto alpha-ketoisovalerate to form ketopantoate. This chain is 3-methyl-2-oxobutanoate hydroxymethyltransferase, found in Pyrobaculum islandicum (strain DSM 4184 / JCM 9189 / GEO3).